The following is a 151-amino-acid chain: Arginine repressor (151 aa).

The protein belongs to the ArgR family.

Its subcellular location is the cytoplasm. It participates in amino-acid biosynthesis; L-arginine biosynthesis [regulation]. Regulates arginine biosynthesis genes. This is Arginine repressor from Lachnospira eligens (strain ATCC 27750 / DSM 3376 / VPI C15-48 / C15-B4) (Eubacterium eligens).